Here is a 203-residue protein sequence, read N- to C-terminus: NAD(P)H dehydrogenase (quinone) (203 aa).

The region spanning 3 to 194 (VLIPFYSMYG…AGARYQGKYI (192 aa)) is the Flavodoxin-like domain. FMN contacts are provided by residues 9 to 14 (SMYGHI) and 82 to 84 (TRF). Tyr-11 contributes to the NAD(+) binding site. Trp-102 is a substrate binding site. FMN contacts are provided by residues 117 to 123 (SSATQHG) and His-138.

This sequence belongs to the WrbA family. It depends on FMN as a cofactor.

The catalysed reaction is a quinone + NADH + H(+) = a quinol + NAD(+). It catalyses the reaction a quinone + NADPH + H(+) = a quinol + NADP(+). The polypeptide is NAD(P)H dehydrogenase (quinone) (Geobacter metallireducens (strain ATCC 53774 / DSM 7210 / GS-15)).